The chain runs to 449 residues: Glucose-6-phosphate isomerase (449 aa).

The active-site Proton donor is the Glu291. Catalysis depends on residues His312 and Lys426.

Belongs to the GPI family.

The protein localises to the cytoplasm. It carries out the reaction alpha-D-glucose 6-phosphate = beta-D-fructose 6-phosphate. It functions in the pathway carbohydrate biosynthesis; gluconeogenesis. Its pathway is carbohydrate degradation; glycolysis; D-glyceraldehyde 3-phosphate and glycerone phosphate from D-glucose: step 2/4. In terms of biological role, catalyzes the reversible isomerization of glucose-6-phosphate to fructose-6-phosphate. In Clostridium botulinum (strain Alaska E43 / Type E3), this protein is Glucose-6-phosphate isomerase.